A 113-amino-acid chain; its full sequence is Beta-microseminoprotein (113 aa).

A signal peptide spans 1–20; that stretch reads MEAWLGSLLFLATMVIASKA. 5 disulfides stabilise this stretch: cysteine 22/cysteine 69, cysteine 38/cysteine 61, cysteine 56/cysteine 92, cysteine 59/cysteine 68, and cysteine 83/cysteine 106.

It belongs to the beta-microseminoprotein family. As to quaternary structure, homodimer; Interacts with PI16.

The protein localises to the secreted. In Mus musculus (Mouse), this protein is Beta-microseminoprotein (Msmb).